The chain runs to 161 residues: Urease accessory protein UreE (161 aa).

The protein belongs to the UreE family. In terms of assembly, homodimer.

Its subcellular location is the cytoplasm. Its function is as follows. Involved in urease metallocenter assembly. Binds nickel. Probably functions as a nickel donor during metallocenter assembly. It is not essential for urease activity. This is Urease accessory protein UreE from Proteus mirabilis (strain HI4320).